Here is a 238-residue protein sequence, read N- to C-terminus: Chromosome partition protein MukE (238 aa).

This sequence belongs to the MukE family. As to quaternary structure, interacts, and probably forms a ternary complex, with MukF and MukB. The complex formation is stimulated by calcium or magnesium.

It localises to the cytoplasm. The protein resides in the nucleoid. Functionally, involved in chromosome condensation, segregation and cell cycle progression. May participate in facilitating chromosome segregation by condensation DNA from both sides of a centrally located replisome during cell division. Probably acts via its interaction with MukB and MukF. In Haemophilus ducreyi (strain 35000HP / ATCC 700724), this protein is Chromosome partition protein MukE.